We begin with the raw amino-acid sequence, 506 residues long: Glutamate--tRNA ligase (506 aa).

Residues 24–34 (PSPTGLQHIGG) carry the 'HIGH' region motif. 4 residues coordinate Zn(2+): Cys-121, Cys-123, Cys-148, and His-150. Positions 266-270 (KLSKR) match the 'KMSKS' region motif. An ATP-binding site is contributed by Lys-269.

Belongs to the class-I aminoacyl-tRNA synthetase family. Glutamate--tRNA ligase type 1 subfamily. In terms of assembly, monomer. Zn(2+) serves as cofactor.

Its subcellular location is the cytoplasm. It carries out the reaction tRNA(Glu) + L-glutamate + ATP = L-glutamyl-tRNA(Glu) + AMP + diphosphate. Its function is as follows. Catalyzes the attachment of glutamate to tRNA(Glu) in a two-step reaction: glutamate is first activated by ATP to form Glu-AMP and then transferred to the acceptor end of tRNA(Glu). In Borrelia duttonii (strain Ly), this protein is Glutamate--tRNA ligase.